We begin with the raw amino-acid sequence, 192 residues long: MSEITLPEYQSIAAELQSASLAVTPAELHGLLVGMLSGGLAINDQTWQPILFDYTNDGMGWPTTALAFAQTVFKVTANELTGSSMELSLLLPDESGEEGLFALADSLSDFVNHFISGLGLAGIALNNASDDAKEALADLEEIAKLGIDEDDDFGEQAQLLEQVIEHVKACVLTIHAEFGARPESSESKPTIH.

This sequence belongs to the UPF0149 family.

The protein is UPF0149 protein VP2588 of Vibrio parahaemolyticus serotype O3:K6 (strain RIMD 2210633).